The sequence spans 356 residues: Probable butyrate kinase (356 aa).

Belongs to the acetokinase family.

The protein resides in the cytoplasm. The catalysed reaction is butanoate + ATP = butanoyl phosphate + ADP. This Coprothermobacter proteolyticus (strain ATCC 35245 / DSM 5265 / OCM 4 / BT) protein is Probable butyrate kinase.